Reading from the N-terminus, the 435-residue chain is 5-methylthioadenosine/S-adenosylhomocysteine deaminase (435 aa).

Zn(2+) is bound by residues His65 and His67. Positions 94, 150, and 189 each coordinate substrate. Position 216 (His216) interacts with Zn(2+). 2 residues coordinate substrate: Glu219 and Asp304. Asp304 is a Zn(2+) binding site.

This sequence belongs to the metallo-dependent hydrolases superfamily. MTA/SAH deaminase family. Zn(2+) serves as cofactor.

The catalysed reaction is S-adenosyl-L-homocysteine + H2O + H(+) = S-inosyl-L-homocysteine + NH4(+). It catalyses the reaction S-methyl-5'-thioadenosine + H2O + H(+) = S-methyl-5'-thioinosine + NH4(+). Functionally, catalyzes the deamination of 5-methylthioadenosine and S-adenosyl-L-homocysteine into 5-methylthioinosine and S-inosyl-L-homocysteine, respectively. Is also able to deaminate adenosine. This chain is 5-methylthioadenosine/S-adenosylhomocysteine deaminase, found in Bacillus anthracis (strain A0248).